Here is a 600-residue protein sequence, read N- to C-terminus: ATP-dependent lipid A-core flippase (600 aa).

The next 5 helical transmembrane spans lie at 28-48 (IMAV…IAFI), 80-100 (IMLM…VANF), 182-202 (WKLS…ISVV), 267-287 (ISQP…LYAA), and 295-315 (DLTA…LQPI). Positions 28-327 (IMAVLGLITY…LTRVNAEFQR (300 aa)) constitute an ABC transmembrane type-1 domain. The region spanning 359–596 (LAFDNVTFAY…AGIYANLYQM (238 aa)) is the ABC transporter domain. 393–400 (GRSGSGKS) provides a ligand contact to ATP.

It belongs to the ABC transporter superfamily. Lipid exporter (TC 3.A.1.106) family. Homodimer.

The protein resides in the cell inner membrane. It carries out the reaction ATP + H2O + lipid A-core oligosaccharideSide 1 = ADP + phosphate + lipid A-core oligosaccharideSide 2.. Functionally, involved in lipopolysaccharide (LPS) biosynthesis. Translocates lipid A-core from the inner to the outer leaflet of the inner membrane. Transmembrane domains (TMD) form a pore in the inner membrane and the ATP-binding domain (NBD) is responsible for energy generation. In Shewanella frigidimarina (strain NCIMB 400), this protein is ATP-dependent lipid A-core flippase.